The following is a 226-amino-acid chain: Ribonuclease 3 (226 aa).

Residues 5-127 (TFQRGDPIGH…IVAAIYLDCG (123 aa)) enclose the RNase III domain. Position 40 (Glu-40) interacts with Mg(2+). The active site involves Asp-44. Mg(2+) contacts are provided by Asp-113 and Glu-116. Glu-116 is an active-site residue. Residues 154 to 224 (DPKTRLQEWL…ATLVIAQLDS (71 aa)) form the DRBM domain.

It belongs to the ribonuclease III family. As to quaternary structure, homodimer. The cofactor is Mg(2+).

It is found in the cytoplasm. The catalysed reaction is Endonucleolytic cleavage to 5'-phosphomonoester.. Its function is as follows. Digests double-stranded RNA. Involved in the processing of primary rRNA transcript to yield the immediate precursors to the large and small rRNAs (23S and 16S). Processes some mRNAs, and tRNAs when they are encoded in the rRNA operon. Processes pre-crRNA and tracrRNA of type II CRISPR loci if present in the organism. This Xanthomonas axonopodis pv. citri (strain 306) protein is Ribonuclease 3.